The primary structure comprises 204 residues: Large ribosomal subunit protein eL15z (204 aa).

The tract at residues 161 to 204 (LRGLTSEGKKNRGLRGKGHNNHKNRPSRRATWKKNNSLSLRRYR) is disordered. The span at 171–192 (NRGLRGKGHNNHKNRPSRRATW) shows a compositional bias: basic residues. Polar residues predominate over residues 193 to 204 (KKNNSLSLRRYR).

Belongs to the eukaryotic ribosomal protein eL15 family.

This is Large ribosomal subunit protein eL15z (RPL15A) from Arabidopsis thaliana (Mouse-ear cress).